Here is a 238-residue protein sequence, read N- to C-terminus: Ditrans,polycis-undecaprenyl-diphosphate synthase ((2E,6E)-farnesyl-diphosphate specific) (238 aa).

D14 is a catalytic residue. D14 serves as a coordination point for Mg(2+). Residues 15-18, W19, R27, H31, and 59-61 each bind substrate; these read GNGR and SSE. The active-site Proton acceptor is N62. Substrate is bound by residues W63, R65, R182, and 188 to 190; that span reads RIS. E201 contacts Mg(2+).

It belongs to the UPP synthase family. As to quaternary structure, homodimer. It depends on Mg(2+) as a cofactor.

It catalyses the reaction 8 isopentenyl diphosphate + (2E,6E)-farnesyl diphosphate = di-trans,octa-cis-undecaprenyl diphosphate + 8 diphosphate. In terms of biological role, catalyzes the sequential condensation of isopentenyl diphosphate (IPP) with (2E,6E)-farnesyl diphosphate (E,E-FPP) to yield (2Z,6Z,10Z,14Z,18Z,22Z,26Z,30Z,34E,38E)-undecaprenyl diphosphate (di-trans,octa-cis-UPP). UPP is the precursor of glycosyl carrier lipid in the biosynthesis of bacterial cell wall polysaccharide components such as peptidoglycan and lipopolysaccharide. The protein is Ditrans,polycis-undecaprenyl-diphosphate synthase ((2E,6E)-farnesyl-diphosphate specific) of Legionella pneumophila subsp. pneumophila (strain Philadelphia 1 / ATCC 33152 / DSM 7513).